A 2371-amino-acid chain; its full sequence is Highly reducing polyketide synthase ntnH (2371 aa).

One can recognise a Ketosynthase family 3 (KS3) domain in the interval 10–429 (PSPIAIVGIG…GANAHVILEG (420 aa)). Active-site for beta-ketoacyl synthase activity residues include Cys180, His316, and His352. The interval 528 to 796 (FIFTGQGAQW…NSCLSRGADA (269 aa)) is malonyl-CoA:ACP transacylase (MAT) domain. The tract at residues 858-986 (HELLGARVIG…GKVHPGNAST (129 aa)) is N-terminal hotdog fold. The dehydratase (DH) domain stretch occupies residues 858–1142 (HELLGARVIG…GIRFRILENN (285 aa)). A PKS/mFAS DH domain is found at 858–1145 (HELLGARVIG…FRILENNRSK (288 aa)). The Proton acceptor; for dehydratase activity role is filled by His890. The C-terminal hotdog fold stretch occupies residues 1001–1145 (VRGVISAKWY…FRILENNRSK (145 aa)). Asp1059 serves as the catalytic Proton donor; for dehydratase activity. Residues 1309 to 1456 (FFQLLGHNKK…FENVTAIMDQ (148 aa)) form a methyltransferase (CMet) domain region. The interval 1669–1968 (GLLSSLQWQG…GHRPIGAICI (300 aa)) is enoyl reductase (ER) (ER) domain. A ketoreductase (KR) domain region spans residues 1993–2167 (SYVLIGGLGG…ASVIDLGVME (175 aa)). Positions 2280 to 2362 (EDETAVAEFL…DLGKLARSRI (83 aa)) constitute a Carrier domain. Ser2322 carries the post-translational modification O-(pantetheine 4'-phosphoryl)serine.

It participates in secondary metabolite biosynthesis; terpenoid biosynthesis. Its function is as follows. Highly reducing polyketide synthase; part of the gene cluster that mediates the biosynthesis of the meroterpenoids nectripenoids A and B, as well as cochliquninone D and isocochliquninone E. The pathway probably begins with the HR-PKS ntnH that catalyzes two chain-extension steps to form a reduced triketide, which then primes the SAT domain in the NR-PKS ntnG to initiate three more cycles of extension to give a linear hexaketide corresponding to the polyketide part of nectripenoids. The FAD-dependent monooxygenase ntnJ then performs an oxidative decarboxylation at C11 of the ntnH/ntnG product, via an electrophilic aromatic hydroxylation with concomitant ipso-decarboxylation. The membrane-bound polyprenyl transferase ntnF then introduces a farnesyl group before the FAD-dependent monooxygenase ntnK functions as the first epoxidase on terminal C12'-C13' olefin, followed by a second epoxidation on C7'-C8' catalyzed by ntnA. The terpene cyclase/mutase ntnI then initiates the sequential tricyclic ring formation through protonation of the terminal epoxide and catalyzes the regioselective and stereoselective 6/6/6-tricyclic ring formation. The cytochrome P450 monooxygenase ntnM may then hydroxylate C1'. This Nectria sp protein is Highly reducing polyketide synthase ntnH.